A 396-amino-acid polypeptide reads, in one-letter code: MAQLLDSPGFIERSAAVPHKAAAAPATRDAAAPAAVPGAAVSFELVGKVFDGPRGPAAALREVTLDIARGGVFGVIGRSGAGKSTLLRLVNGLERPTSGAVRVNGVDVGTLDERGLVALRRRIGMVFQHFNLLSAKTVAQNIGLPLKIAGVPKAERARKVDALLDLVGLAAKRDAYPASLSGGQKQRVGIARALVHDPALLLCDEATSALDPETTQSILALLADINRRLGLTIMLITHEMEVIRAVCDTVAVVEQGEVVETGPVWRVFGDPRHGATRALLRTLAHDLPADLAAHVRPLDGAAPLPCGAQLLLDVRYTGASGGEPDLGALTAALARNVGDAVHFVHGGLDRIQGRVQGRLVIAASLAARGAAGPDRIAAALAAARRHANRVEVLGYV.

An ABC transporter domain is found at 41 to 280 (VSFELVGKVF…PRHGATRALL (240 aa)). 77–84 (GRSGAGKS) contacts ATP.

The protein belongs to the ABC transporter superfamily. Methionine importer (TC 3.A.1.24) family. In terms of assembly, the complex is composed of two ATP-binding proteins (MetN), two transmembrane proteins (MetI) and a solute-binding protein (MetQ).

Its subcellular location is the cell inner membrane. The catalysed reaction is L-methionine(out) + ATP + H2O = L-methionine(in) + ADP + phosphate + H(+). The enzyme catalyses D-methionine(out) + ATP + H2O = D-methionine(in) + ADP + phosphate + H(+). Its function is as follows. Part of the ABC transporter complex MetNIQ involved in methionine import. Responsible for energy coupling to the transport system. The sequence is that of Methionine import ATP-binding protein MetN 2 from Burkholderia mallei (strain ATCC 23344).